Here is a 431-residue protein sequence, read N- to C-terminus: GTPase Obg (431 aa).

The Obg domain maps to 1–158 (MFVDQVKISL…IEVTLELKLL (158 aa)). The tract at residues 118 to 144 (KGGRGGRGNSRFASPRNPAPDFSENGE) is disordered. In terms of domain architecture, OBG-type G spans 159–330 (ADVGLVGFPS…LLYAIADKLE (172 aa)). Residues 165–172 (GFPSVGKS), 190–194 (FTTIK), 212–215 (DLPG), 282–285 (NKMD), and 311–313 (STF) contribute to the GTP site. Mg(2+) is bound by residues Ser172 and Thr192. Residues 353-431 (KHTPSQDKFT…ILGGEFEFVE (79 aa)) enclose the OCT domain.

The protein belongs to the TRAFAC class OBG-HflX-like GTPase superfamily. OBG GTPase family. As to quaternary structure, monomer. Mg(2+) is required as a cofactor.

The protein localises to the cytoplasm. In terms of biological role, an essential GTPase which binds GTP, GDP and possibly (p)ppGpp with moderate affinity, with high nucleotide exchange rates and a fairly low GTP hydrolysis rate. Plays a role in control of the cell cycle, stress response, ribosome biogenesis and in those bacteria that undergo differentiation, in morphogenesis control. This Staphylococcus saprophyticus subsp. saprophyticus (strain ATCC 15305 / DSM 20229 / NCIMB 8711 / NCTC 7292 / S-41) protein is GTPase Obg.